Consider the following 227-residue polypeptide: uncharacterized protein (227 aa).

An N-terminal signal peptide occupies residues 1–22; that stretch reads MDSVMRKSLFLLLPLVVTNAHA.

This is an uncharacterized protein from Salmonella typhi.